We begin with the raw amino-acid sequence, 560 residues long: Beta-hexosaminidase subunit B1 (560 aa).

The first 25 residues, 1–25, serve as a signal peptide directing secretion; that stretch reads MIILKRNIVFLLIIIIVLGIFIATS. N-linked (GlcNAc...) asparagine glycosylation is found at Asn59, Asn69, Asn81, Asn99, Asn161, Asn293, and Asn346. Glu359 (proton donor) is an active-site residue. 4 N-linked (GlcNAc...) asparagine glycosylation sites follow: Asn366, Asn436, Asn472, and Asn547.

The protein belongs to the glycosyl hydrolase 20 family.

It localises to the lysosome. The catalysed reaction is Hydrolysis of terminal non-reducing N-acetyl-D-hexosamine residues in N-acetyl-beta-D-hexosaminides.. Its function is as follows. Responsible for the degradation of GM2 gangliosides, and a variety of other molecules containing terminal N-acetyl hexosamines. The protein is Beta-hexosaminidase subunit B1 (hexb1) of Dictyostelium discoideum (Social amoeba).